A 618-amino-acid polypeptide reads, in one-letter code: Grainyhead-like protein 1 homolog (618 aa).

Residues 1-91 form a transcription activation region; it reads MTQEYDNKRP…EGEHPEPEHS (91 aa). A compositionally biased stretch (basic and acidic residues) spans 76-92; sequence SSAVKPEGEHPEPEHSK. The disordered stretch occupies residues 76–100; it reads SSAVKPEGEHPEPEHSKRNSIPNVT. T208 carries the phosphothreonine modification. In terms of domain architecture, Grh/CP2 DB spans 248–474; it reads SGNNFEYTLE…DLDTQPVLFI (227 aa). Interaction with DNA stretches follow at residues 380–389 and 427–430; these read TDFSSQKGVK and RKIR.

It belongs to the grh/CP2 family. Grainyhead subfamily. As to quaternary structure, binds DNA as homodimer. Homodimer, also forms heterodimers with GRHL2 or GRHL3. Methylation at Arg-9 and Lys-116 may be involved in regulating transcriptional activation. As to expression, isoform 1 is highly expressed in brain, pancreas, tonsil, placenta and kidney. Isoform 2 is highly expressed in brain and liver. Expression in the skin is confined to the suprabasal layers of the epidermis and to the hair follicles.

The protein resides in the nucleus. Transcription factor involved in epithelial development. Binds directly to the consensus DNA sequence 5'-AACCGGTT-3'. Important regulator of DSG1 in the context of hair anchorage and epidermal differentiation, participates in the maintenance of the skin barrier. There is no genetic interaction with GRHL3, nor functional cooperativity due to diverse target gene selectivity during epithelia development. May play a role in regulating glucose homeostasis and insulin signaling. This Mus musculus (Mouse) protein is Grainyhead-like protein 1 homolog.